The primary structure comprises 33 residues: Photosystem II reaction center protein Psb30 (33 aa).

Residues 5–25 (LIVQLGSLTLITLAGPLVVVL) form a helical membrane-spanning segment.

The protein belongs to the Psb30/Ycf12 family. PSII is composed of 1 copy each of membrane proteins PsbA, PsbB, PsbC, PsbD, PsbE, PsbF, PsbH, PsbI, PsbJ, PsbK, PsbL, PsbM, PsbT, PsbY, PsbZ, Psb30/Ycf12, peripheral proteins of the oxygen-evolving complex and a large number of cofactors. It forms dimeric complexes.

The protein localises to the plastid. It is found in the chloroplast thylakoid membrane. A core subunit of photosystem II (PSII), probably helps stabilize the reaction center. The chain is Photosystem II reaction center protein Psb30 from Euglena deses.